A 161-amino-acid polypeptide reads, in one-letter code: Large ribosomal subunit protein uL10 (161 aa).

This sequence belongs to the universal ribosomal protein uL10 family. As to quaternary structure, part of the ribosomal stalk of the 50S ribosomal subunit. The N-terminus interacts with L11 and the large rRNA to form the base of the stalk. The C-terminus forms an elongated spine to which L12 dimers bind in a sequential fashion forming a multimeric L10(L12)X complex.

Its function is as follows. Forms part of the ribosomal stalk, playing a central role in the interaction of the ribosome with GTP-bound translation factors. The polypeptide is Large ribosomal subunit protein uL10 (rplJ) (Mycoplasma pneumoniae (strain ATCC 29342 / M129 / Subtype 1) (Mycoplasmoides pneumoniae)).